Here is an 814-residue protein sequence, read N- to C-terminus: Phosphatidylinositol 3-kinase VPS34 (814 aa).

The 153-residue stretch at 25–177 (LDGNLPVKKS…EKLMNKYERG (153 aa)) folds into the C2 PI3K-type domain. Residues 274–449 (DRDLKPSNIE…YSTYELLEEN (176 aa)) form the PIK helical domain. The region spanning 532 to 799 (VAGESSLFKS…LINESVSALF (268 aa)) is the PI3K/PI4K catalytic domain. The G-loop stretch occupies residues 538–544 (LFKSALH). The segment at 668-676 (GIGDRHLDN) is catalytic loop. The interval 687–708 (HVDFAFILGRDPKPFPPPMKLC) is activation loop.

The protein belongs to the PI3/PI4-kinase family. Interacts with VPS15. Component of a complex made of VPS38/USL1 and PI3K main subunits such as VPS15, ATG6/VPS30 and VPS34. Binds directly to VPS38/USL1.

The catalysed reaction is a 1,2-diacyl-sn-glycero-3-phospho-(1D-myo-inositol) + ATP = a 1,2-diacyl-sn-glycero-3-phospho-(1D-myo-inositol-3-phosphate) + ADP + H(+). With respect to regulation, the PI3K inhibitor LY294002 affects phosphatidylinositol 3-phosphate (PI3P) levels and triggers a decrease in proline, hydrophobic and aromatic amino acids, and sugars (e.g. raffinose) accumulation in response to salt treatment correlated with lower P5CS1 expression and higher ProDH1 expression, genes involved in proline biosynthesis and catabolism, respectively. Its function is as follows. Involved in the negative regulation of proline, hydrophobic and aromatic amino acids accumulation, especially in response to salt (NaCl), either through inhibition of their synthesis and/or promotion of their catabolism. Triggers defense responses (e.g. pathogenesis related (PR1 and PR5) gene expression and hydrogen peroxide H(2)O(2) burst) to the bacterial pathogen compatible Pseudomonas syringae pv tomato DC3000 (Pst DC3000) and incompatible Pst DC3000 (avrRpt2), by regulating reactive ogygen species (ROS) production and by promoting stomatal closure. In Arabidopsis thaliana (Mouse-ear cress), this protein is Phosphatidylinositol 3-kinase VPS34.